The chain runs to 96 residues: Putative pterin-4-alpha-carbinolamine dehydratase (96 aa).

It belongs to the pterin-4-alpha-carbinolamine dehydratase family.

The enzyme catalyses (4aS,6R)-4a-hydroxy-L-erythro-5,6,7,8-tetrahydrobiopterin = (6R)-L-erythro-6,7-dihydrobiopterin + H2O. This is Putative pterin-4-alpha-carbinolamine dehydratase from Rhodospirillum rubrum (strain ATCC 11170 / ATH 1.1.1 / DSM 467 / LMG 4362 / NCIMB 8255 / S1).